We begin with the raw amino-acid sequence, 685 residues long: Exocyst complex component 8 (685 aa).

One can recognise a PH domain in the interval 151–251; sequence YLVYNGDLTE…WLEILEQTKK (101 aa). Residues 254 to 263 are compositionally biased toward basic and acidic residues; the sequence is ALNEKQKQEE. Positions 254-273 are disordered; the sequence is ALNEKQKQEETTPQLPVVPE.

This sequence belongs to the EXO84 family. The exocyst complex is composed of exoc1, exoc2, exoc3, exoc4, exoc5, exoc6, exoc7 and exoc8.

The protein localises to the cytoplasm. The protein resides in the perinuclear region. It localises to the cell projection. It is found in the growth cone. In terms of biological role, component of the exocyst complex involved in the docking of exocytic vesicles with fusion sites on the plasma membrane. The polypeptide is Exocyst complex component 8 (exoc8) (Xenopus laevis (African clawed frog)).